The sequence spans 185 residues: Ribosome-recycling factor (185 aa).

The span at 131-155 shows a compositional bias: basic and acidic residues; the sequence is DRKNANDKIKKSEKDKEITADESKS. A disordered region spans residues 131–156; that stretch reads DRKNANDKIKKSEKDKEITADESKSA.

It belongs to the RRF family.

The protein localises to the cytoplasm. In terms of biological role, responsible for the release of ribosomes from messenger RNA at the termination of protein biosynthesis. May increase the efficiency of translation by recycling ribosomes from one round of translation to another. This is Ribosome-recycling factor from Sulfurimonas denitrificans (strain ATCC 33889 / DSM 1251) (Thiomicrospira denitrificans (strain ATCC 33889 / DSM 1251)).